Here is an 877-residue protein sequence, read N- to C-terminus: Alanine--tRNA ligase (877 aa).

His567, His571, Cys669, and His673 together coordinate Zn(2+).

It belongs to the class-II aminoacyl-tRNA synthetase family. Zn(2+) serves as cofactor.

It is found in the cytoplasm. It catalyses the reaction tRNA(Ala) + L-alanine + ATP = L-alanyl-tRNA(Ala) + AMP + diphosphate. In terms of biological role, catalyzes the attachment of alanine to tRNA(Ala) in a two-step reaction: alanine is first activated by ATP to form Ala-AMP and then transferred to the acceptor end of tRNA(Ala). Also edits incorrectly charged Ser-tRNA(Ala) and Gly-tRNA(Ala) via its editing domain. This chain is Alanine--tRNA ligase, found in Rickettsia typhi (strain ATCC VR-144 / Wilmington).